Here is a 51-residue protein sequence, read N- to C-terminus: Light-harvesting protein B800/850/890 beta-2 chain (51 aa).

Over 1 to 17 the chain is Cytoplasmic; that stretch reads ADEMRNVSDEEAKEFHA. A bacteriochlorophyll is bound by residues His-16 and His-34. The chain crosses the membrane as a helical span at residues 18 to 40; it reads MFSQAFTVYVGVAVVAHILAWAW. Residues 41-51 lie on the Periplasmic side of the membrane; the sequence is RPWIPGDEGFG.

The protein belongs to the antenna complex beta subunit family. In terms of assembly, the core complex is formed by different alpha and beta chains, binding bacteriochlorophyll molecules, and arranged most probably in tetrameric structures disposed around the reaction center. The non-pigmented gamma chains may constitute additional components.

The protein localises to the cell inner membrane. In terms of biological role, antenna complexes are light-harvesting systems, which transfer the excitation energy to the reaction centers. The chain is Light-harvesting protein B800/850/890 beta-2 chain from Halorhodospira halophila (strain DSM 244 / SL1) (Ectothiorhodospira halophila (strain DSM 244 / SL1)).